A 106-amino-acid chain; its full sequence is UPF0060 membrane protein RL1530 (106 aa).

The next 4 membrane-spanning stretches (helical) occupy residues 4–24 (IIFAFAALFEIAGCFAFWAWL), 30–50 (VWWLAPGMVSLALFAWILTLV), 58–78 (TFAAYGGIYILASLLWLWLVE), and 86–106 (DIGGALICLAGASLILFAPRG).

The protein belongs to the UPF0060 family.

It localises to the cell inner membrane. In Rhizobium johnstonii (strain DSM 114642 / LMG 32736 / 3841) (Rhizobium leguminosarum bv. viciae), this protein is UPF0060 membrane protein RL1530.